A 132-amino-acid polypeptide reads, in one-letter code: Putative apolipoprotein(a)-like protein 2 (132 aa).

The N-terminal stretch at 1–21 (MEHKEVVLLLLLFLKSAPTET) is a signal peptide. The Kringle domain maps to 27–105 (ECYHSNGQSY…RWEYCNLTRC (79 aa)). 3 cysteine pairs are disulfide-bonded: Cys-28–Cys-105, Cys-49–Cys-88, and Cys-77–Cys-100. N-linked (GlcNAc...) asparagine glycosylation is present at Asn-101.

In terms of tissue distribution, expressed in liver but not in other tissues tested.

It is found in the secreted. This Homo sapiens (Human) protein is Putative apolipoprotein(a)-like protein 2 (LPAL2).